We begin with the raw amino-acid sequence, 186 residues long: Ribosome-recycling factor (186 aa).

The protein belongs to the RRF family.

The protein localises to the cytoplasm. Its function is as follows. Responsible for the release of ribosomes from messenger RNA at the termination of protein biosynthesis. May increase the efficiency of translation by recycling ribosomes from one round of translation to another. In Coprothermobacter proteolyticus (strain ATCC 35245 / DSM 5265 / OCM 4 / BT), this protein is Ribosome-recycling factor.